The chain runs to 1129 residues: MPSEVPESLVQALAQILHEHGDKVLDGSRILALLTPCLQVVTRLFEQLFPRGPGTGFQALPAHPADSVPILRAQFMLDMLQKTPSLKLVHPAECPRQFDVNIFPFKSLRSLELRCLPPHCLRGLRSVYSQLEVLTCYRCVSSLEEVIALCGGDLSSALPWLVLHTLDFSYNTLKNLDGSLELLNSLKILDLSHNQITECGSYLKVLSELQYLNLGYNHLTAVPELSVGNTAKLHSLILKHNQLSGTSGLENLPNLQHLDLSYNLLLEHSQLSGLARLHNLKQLFLEGNPLYFQKDYRALTAQHLSHKASDNVLLDGKLLSSSEIMNAQAFGEKVRLQPSSSATESSCTGDLTDSYSAAEKSAPRLPRKKSRVKVRTASISERSDSEYERRGQPIVLQHQREIERTDSFREQYGEDWLQYRPHLEGELDPEYVNRPHSPPPRASPSPTAPSSVPKQKSPVPAPEPSPSPKSGHVAPDDQLMEKAEEGLEEHLWGLQEAKKPNEEEGLIGGALCSPVVVCPVLNGQPRNPDWPWVFLRITLHFLLEMDPERGRILLKRELRSLRGIQTSLAPWKCNGEEQELPLLTLSFDSVCEEKQTVNYIVLDNSPESSVTTLLDLLRPMLERNLREKAESQDELTRMQCLKCKAEFRNEVDGGDIYSPESLQQGKEPTAGLHRNHTGDASCPSCGSLHIILAPLNPTGETSTPLRPLSAEPPQGDDGGGGLAAKSFYLSEDEDSSETDSSPNTAPSEAESTIFYSFDTEGQDQQSAQDTGRSSLTGSYKYTALNQSGALSQDGWQISPGPASTLDFRLVDHRLKLYLDMEVLNGDMEEFRCCMKVPVIRFGKVSEFWAVVAVSNQKIYFLEITGEIRDNPSDWLQPIESQSLTSLARLHVGLQEHSLHLGFGGSGGAYTLLTRNQQHCRVFHKHMLDVLAELPARYLGNIQQSSEEPITPQHRLWPFLQDKVGAPESNAPPRFLYVPLFFLREDIVSPNADSPCANANSQLPLLNTASPAALIQGAAAAAPLSLLVTRTHMYLLEEDHQWLPDTLDTELPDSVQMKEKQPISNISSVHLFQSATLHLRIHLYNETQQNESAWLLWTEDPDRTREIVEWLREPWEAEYHIHFNPVTHNT.

8 LRR repeats span residues 107 to 128 (SLRS…RSVY), 130 to 150 (QLEV…IALC), 162 to 183 (VLHT…LELL), 185 to 206 (SLKI…LKVL), 208 to 229 (ELQY…SVGN), 232 to 253 (KLHS…ENLP), 254 to 275 (NLQH…SGLA), and 279 to 300 (NLKQ…RALT). Disordered stretches follow at residues 335–392 (RLQP…RRGQ), 428–475 (DPEY…HVAP), 654–678 (GDIY…NHTG), and 696–724 (NPTG…GLAA). Positions 337–355 (QPSSSATESSCTGDLTDSY) are enriched in polar residues. The span at 365–374 (LPRKKSRVKV) shows a compositional bias: basic residues. Basic and acidic residues predominate over residues 381–391 (ERSDSEYERRG). Residues 436–447 (HSPPPRASPSPT) show a composition bias toward pro residues. Positions 448 to 458 (APSSVPKQKSP) are enriched in low complexity.

This sequence belongs to the STK11IP family.

The protein localises to the cytoplasm. The sequence is that of Serine/threonine-protein kinase 11-interacting protein (stk11ip) from Xenopus tropicalis (Western clawed frog).